The primary structure comprises 83 residues: Small ribosomal subunit protein bS16 (83 aa).

Belongs to the bacterial ribosomal protein bS16 family.

The polypeptide is Small ribosomal subunit protein bS16 (Finegoldia magna (strain ATCC 29328 / DSM 20472 / WAL 2508) (Peptostreptococcus magnus)).